The sequence spans 264 residues: Thymidylate synthase (264 aa).

DUMP is bound at residue Arg-21. A (6R)-5,10-methylene-5,6,7,8-tetrahydrofolate-binding site is contributed by His-51. 126 to 127 (RR) is a binding site for dUMP. Cys-146 acts as the Nucleophile in catalysis. DUMP is bound by residues 166-169 (RSCD), Asn-177, and 207-209 (HLY). Asp-169 lines the (6R)-5,10-methylene-5,6,7,8-tetrahydrofolate pocket. Residue Ala-263 participates in (6R)-5,10-methylene-5,6,7,8-tetrahydrofolate binding.

It belongs to the thymidylate synthase family. Bacterial-type ThyA subfamily. Homodimer.

The protein resides in the cytoplasm. The enzyme catalyses dUMP + (6R)-5,10-methylene-5,6,7,8-tetrahydrofolate = 7,8-dihydrofolate + dTMP. It functions in the pathway pyrimidine metabolism; dTTP biosynthesis. Functionally, catalyzes the reductive methylation of 2'-deoxyuridine-5'-monophosphate (dUMP) to 2'-deoxythymidine-5'-monophosphate (dTMP) while utilizing 5,10-methylenetetrahydrofolate (mTHF) as the methyl donor and reductant in the reaction, yielding dihydrofolate (DHF) as a by-product. This enzymatic reaction provides an intracellular de novo source of dTMP, an essential precursor for DNA biosynthesis. The protein is Thymidylate synthase of Yersinia pestis bv. Antiqua (strain Antiqua).